A 132-amino-acid polypeptide reads, in one-letter code: Large ribosomal subunit protein bL21 (132 aa).

The tract at residues 112–132 is disordered; sequence AEKPARKPRAKKTNEVTTDGA.

It belongs to the bacterial ribosomal protein bL21 family. As to quaternary structure, part of the 50S ribosomal subunit. Contacts protein L20.

Its function is as follows. This protein binds to 23S rRNA in the presence of protein L20. The chain is Large ribosomal subunit protein bL21 from Dehalococcoides mccartyi (strain ATCC BAA-2266 / KCTC 15142 / 195) (Dehalococcoides ethenogenes (strain 195)).